The primary structure comprises 245 residues: 1-(5-phosphoribosyl)-5-[(5-phosphoribosylamino)methylideneamino] imidazole-4-carboxamide isomerase (245 aa).

Asp-8 (proton acceptor) is an active-site residue. Asp-130 acts as the Proton donor in catalysis.

This sequence belongs to the HisA/HisF family.

The protein localises to the cytoplasm. The enzyme catalyses 1-(5-phospho-beta-D-ribosyl)-5-[(5-phospho-beta-D-ribosylamino)methylideneamino]imidazole-4-carboxamide = 5-[(5-phospho-1-deoxy-D-ribulos-1-ylimino)methylamino]-1-(5-phospho-beta-D-ribosyl)imidazole-4-carboxamide. It participates in amino-acid biosynthesis; L-histidine biosynthesis; L-histidine from 5-phospho-alpha-D-ribose 1-diphosphate: step 4/9. The polypeptide is 1-(5-phosphoribosyl)-5-[(5-phosphoribosylamino)methylideneamino] imidazole-4-carboxamide isomerase (Azotobacter vinelandii (strain DJ / ATCC BAA-1303)).